The sequence spans 320 residues: Cytochrome f (320 aa).

The first 35 residues, 1-35, serve as a signal peptide directing secretion; sequence MENRNTFSWVKEQMTRSISVSIMIYVITQTSISNA. Positions 36, 56, 59, and 60 each coordinate heme. A helical transmembrane segment spans residues 286–306; the sequence is VQGLLFFFASVILAQVFLVLK.

It belongs to the cytochrome f family. As to quaternary structure, the 4 large subunits of the cytochrome b6-f complex are cytochrome b6, subunit IV (17 kDa polypeptide, petD), cytochrome f and the Rieske protein, while the 4 small subunits are PetG, PetL, PetM and PetN. The complex functions as a dimer. The cofactor is heme.

The protein localises to the plastid. It is found in the chloroplast thylakoid membrane. Component of the cytochrome b6-f complex, which mediates electron transfer between photosystem II (PSII) and photosystem I (PSI), cyclic electron flow around PSI, and state transitions. The sequence is that of Cytochrome f from Agrostis stolonifera (Creeping bentgrass).